The primary structure comprises 433 residues: Cyclin-dependent kinase F-3 (433 aa).

A Protein kinase domain is found at 4-283; the sequence is YKVIREIGDG…AEQSLQHPFF (280 aa). ATP is bound by residues 10–18 and Lys-33; that span reads IGDGTCGNV. Asp-125 serves as the catalytic Proton acceptor. Ser-151 bears the Phosphoserine mark. Thr-156 carries the post-translational modification Phosphothreonine.

The protein belongs to the protein kinase superfamily. CMGC Ser/Thr protein kinase family. CDC2/CDKX subfamily.

It carries out the reaction L-seryl-[protein] + ATP = O-phospho-L-seryl-[protein] + ADP + H(+). It catalyses the reaction L-threonyl-[protein] + ATP = O-phospho-L-threonyl-[protein] + ADP + H(+). The catalysed reaction is [DNA-directed RNA polymerase] + ATP = phospho-[DNA-directed RNA polymerase] + ADP + H(+). This chain is Cyclin-dependent kinase F-3 (CDKF-3), found in Oryza sativa subsp. japonica (Rice).